Reading from the N-terminus, the 334-residue chain is Formamidase (334 aa).

Residues 14–260 enclose the CN hydrolase domain; that stretch reads FLVAAIQFPV…WEIVTGEIYP (247 aa). Residue glutamate 60 is the Proton acceptor of the active site. Catalysis depends on lysine 133, which acts as the Proton donor. The active-site Nucleophile is the cysteine 166.

This sequence belongs to the carbon-nitrogen hydrolase superfamily. Aliphatic amidase family.

It carries out the reaction formamide + H2O = formate + NH4(+). Is an aliphatic amidase with a restricted substrate specificity, as it only hydrolyzes formamide. This Helicobacter acinonychis (strain Sheeba) protein is Formamidase.